The sequence spans 218 residues: Large ribosomal subunit protein uL3c (218 aa).

Residues 127–161 form a disordered region; sequence GFSRGPMTHGSKNHREPGSTGAGTTPGRIYPGKRM.

This sequence belongs to the universal ribosomal protein uL3 family. Part of the 50S ribosomal subunit.

It localises to the plastid. Its subcellular location is the organellar chromatophore. Functionally, one of the primary rRNA binding proteins, it binds directly near the 3'-end of the 23S rRNA, where it nucleates assembly of the 50S subunit. In Paulinella chromatophora, this protein is Large ribosomal subunit protein uL3c (rpl3).